The sequence spans 491 residues: 3-octaprenyl-4-hydroxybenzoate carboxy-lyase (491 aa).

Asn-172 lines the Mn(2+) pocket. Prenylated FMN is bound by residues 175-177, 189-191, and 194-195; these read IYR, RWL, and RG. Glu-238 is a binding site for Mn(2+). The Proton donor role is filled by Asp-287.

This sequence belongs to the UbiD family. In terms of assembly, homohexamer. Prenylated FMN serves as cofactor. It depends on Mn(2+) as a cofactor.

Its subcellular location is the cell membrane. The enzyme catalyses a 4-hydroxy-3-(all-trans-polyprenyl)benzoate + H(+) = a 2-(all-trans-polyprenyl)phenol + CO2. It functions in the pathway cofactor biosynthesis; ubiquinone biosynthesis. Functionally, catalyzes the decarboxylation of 3-octaprenyl-4-hydroxy benzoate to 2-octaprenylphenol, an intermediate step in ubiquinone biosynthesis. The sequence is that of 3-octaprenyl-4-hydroxybenzoate carboxy-lyase from Klebsiella pneumoniae subsp. pneumoniae (strain ATCC 700721 / MGH 78578).